The following is a 478-amino-acid chain: Microfibrillar-associated protein 1 (478 aa).

Over residues 1 to 20 the composition is skewed to low complexity; the sequence is MSAATAAAAASGIQSTAGAI. 2 disordered regions span residues 1-276 and 456-478; these read MSAA…RRAT and NEHA…KKME. Acidic residues predominate over residues 53–62; sequence SSEESDDDDF. Residues 107–128 are compositionally biased toward basic and acidic residues; sequence DDPRLRRLRQRPVDMEDMERER. Positions 140 to 153 are enriched in acidic residues; that stretch reads IMESDSEDEEEDEG. The span at 160–170 shows a compositional bias: polar residues; it reads RGTNKITLASE. Residues 171 to 181 show a composition bias toward acidic residues; that stretch reads SDTDAELSDTE. Residues 197–212 show a composition bias toward basic and acidic residues; sequence QREEEVLQKEDEKQSE. The segment covering 214-231 has biased composition (acidic residues); that stretch reads SESESSEYEEETESEEDN. The interval 229–478 is interaction with Prp38; that stretch reads EDNEPRLKPL…PTGSKRKKME (250 aa). Basic and acidic residues predominate over residues 245–268; it reads RATIQEKEREAQKQKQLEAEAKRA.

Belongs to the MFAP1 family. Component of the spliceosome B complex. Interacts (via C-terminus) with Prp38.

The protein localises to the nucleus. Required for pre-mRNA splicing. The sequence is that of Microfibrillar-associated protein 1 from Drosophila melanogaster (Fruit fly).